A 251-amino-acid chain; its full sequence is Probable transcriptional regulatory protein MRA_2631 (251 aa).

It belongs to the TACO1 family.

It localises to the cytoplasm. The chain is Probable transcriptional regulatory protein MRA_2631 from Mycobacterium tuberculosis (strain ATCC 25177 / H37Ra).